We begin with the raw amino-acid sequence, 404 residues long: Keratin, type I cuticular Ha3-II (404 aa).

The tract at residues 1-56 is head; it reads MPYNFCLPSLSCRTSCSSRPCVPPSCHGYTLPGACNIPANVSNCNWFCEGSFNGSE. In terms of domain architecture, IF rod spans 56–367; it reads EKETMQFLND…SLLESEDCKL (312 aa). Residues 57-91 are coil 1A; sequence KETMQFLNDRLASYLEKVRQLERDNAELENLIRER. Positions 92 to 102 are linker 1; the sequence is SQQQEPLLCPS. The tract at residues 103–203 is coil 1B; it reads YQSYFKTIEE…HEQEVNTLRC (101 aa). The interval 204 to 219 is linker 12; sequence QLGDRLNVEVDAAPAV. The segment at 220-363 is coil 2; sequence DLNQVLNETR…NTYRSLLESE (144 aa). Residues 364 to 404 form a tail region; it reads DCKLPSNPCATTNACEKPIGSCVTNPCGPRSRCGPCNTFGY.

It belongs to the intermediate filament family.

In Homo sapiens (Human), this protein is Keratin, type I cuticular Ha3-II (KRT33B).